The chain runs to 139 residues: Large ribosomal subunit protein uL16 (139 aa).

The protein belongs to the universal ribosomal protein uL16 family. Part of the 50S ribosomal subunit.

Functionally, binds 23S rRNA and is also seen to make contacts with the A and possibly P site tRNAs. The protein is Large ribosomal subunit protein uL16 of Crocosphaera subtropica (strain ATCC 51142 / BH68) (Cyanothece sp. (strain ATCC 51142)).